A 354-amino-acid polypeptide reads, in one-letter code: Replication factor C subunit 5 (354 aa).

40 to 47 (YGPSGSGK) contacts ATP.

The protein belongs to the activator 1 small subunits family. Heterotetramer of subunits RFC2, RFC3, RFC4 and RFC5 that can form a complex with RFC1. Expressed in roots, leaves, shoot apical meristem (SAM), flag leaves and panicles.

It localises to the nucleus. Functionally, may be involved in DNA replication and thus regulate cell proliferation. In Oryza sativa subsp. japonica (Rice), this protein is Replication factor C subunit 5 (RFC5).